The following is a 553-amino-acid chain: ATP synthase F(1) complex subunit alpha, mitochondrial (553 aa).

The N-terminal 43 residues, 1–43, are a transit peptide targeting the mitochondrion; that stretch reads MLSVRIAAAVARALPRRAGLVSKNALGSSFVGTRNLHASNTRL. A phosphoserine mark is found at serine 53 and serine 65. Serine 76 is subject to Phosphoserine; alternate. O-linked (GlcNAc) serine; alternate glycosylation is present at serine 76. Residue serine 106 is modified to Phosphoserine. Residues lysine 123, lysine 126, and lysine 132 each carry the N6-acetyllysine modification. Position 134 is a phosphothreonine (threonine 134). The residue at position 161 (lysine 161) is an N6-acetyllysine; alternate. At lysine 161 the chain carries N6-succinyllysine; alternate. Serine 166 bears the Phosphoserine mark. Lysine 167 bears the N6-acetyllysine; alternate mark. At lysine 167 the chain carries N6-succinyllysine; alternate. Serine 184 carries the post-translational modification Phosphoserine. Arginine 204 carries the post-translational modification Omega-N-methylarginine. ATP contacts are provided by glutamine 215, glycine 217, lysine 218, threonine 219, and serine 220. Residue threonine 219 coordinates Mg(2+). An N6-acetyllysine; alternate mark is found at lysine 230 and lysine 239. An N6-succinyllysine; alternate mark is found at lysine 230 and lysine 239. N6-acetyllysine is present on lysine 240. 2 positions are modified to N6-acetyllysine; alternate: lysine 261 and lysine 305. 2 positions are modified to N6-succinyllysine; alternate: lysine 261 and lysine 305. Residue aspartate 312 participates in Mg(2+) binding. The residue at position 427 (lysine 427) is an N6-acetyllysine; alternate. N6-succinyllysine; alternate is present on lysine 427. The residue at position 434 (lysine 434) is an N6-acetyllysine. Residues glutamine 473 and glutamine 475 each coordinate ATP. 4 positions are modified to N6-acetyllysine; alternate: lysine 498, lysine 506, lysine 531, and lysine 539. Lysine 498, lysine 506, lysine 531, and lysine 539 each carry N6-succinyllysine; alternate. Lysine 541 carries the N6-acetyllysine modification.

The protein belongs to the ATPase alpha/beta chains family. Homotrimer. Component of the ATP synthase complex composed at least of ATP5F1A/subunit alpha, ATP5F1B/subunit beta, ATP5MC1/subunit c (homooctomer), MT-ATP6/subunit a, MT-ATP8/subunit 8, ATP5ME/subunit e, ATP5MF/subunit f, ATP5MG/subunit g, ATP5MK/subunit k, ATP5MJ/subunit j, ATP5F1C/subunit gamma, ATP5F1D/subunit delta, ATP5F1E/subunit epsilon, ATP5PF/subunit F6, ATP5PB/subunit b, ATP5PD/subunit d, ATP5PO/subunit OSCP. ATP synthase complex consists of a soluble F(1) head domain (subunits alpha(3) and beta(3)) - the catalytic core - and a membrane F(0) domain - the membrane proton channel (subunits c, a, 8, e, f, g, k and j). These two domains are linked by a central stalk (subunits gamma, delta, and epsilon) rotating inside the F1 region and a stationary peripheral stalk (subunits F6, b, d, and OSCP). Interacts with ATPAF2. Interacts with HRG; the interaction occurs on the surface of T-cells and alters the cell morphology when associated with concanavalin (in vitro). Interacts with PLG (angiostatin peptide); the interaction inhibits most of the angiogenic properties of angiostatin. Interacts with BLOC1S1. Interacts with BCL2L1 isoform BCL-X(L); the interaction mediates the association of BCL2L1 isoform BCL-X(L) with the mitochondrial membrane F(1)F(0) ATP synthase and enhances neurons metabolic efficiency. Interacts with CLN5 and PPT1. Interacts with S100A1; this interaction increases F1-ATPase activity. Interacts with ABCB7; this interaction allows the regulation of cellular iron homeostasis and cellular reactive oxygen species (ROS) levels in cardiomyocytes. In terms of processing, acetylated on lysine residues. BLOC1S1 is required for acetylation. As to expression, expressed in flagella of epididymal sperm.

It is found in the mitochondrion. The protein localises to the mitochondrion inner membrane. The protein resides in the cell membrane. Its function is as follows. Subunit alpha, of the mitochondrial membrane ATP synthase complex (F(1)F(0) ATP synthase or Complex V) that produces ATP from ADP in the presence of a proton gradient across the membrane which is generated by electron transport complexes of the respiratory chain. ATP synthase complex consist of a soluble F(1) head domain - the catalytic core - and a membrane F(1) domain - the membrane proton channel. These two domains are linked by a central stalk rotating inside the F(1) region and a stationary peripheral stalk. During catalysis, ATP synthesis in the catalytic domain of F(1) is coupled via a rotary mechanism of the central stalk subunits to proton translocation. In vivo, can only synthesize ATP although its ATP hydrolase activity can be activated artificially in vitro. With the catalytic subunit beta (ATP5F1B), forms the catalytic core in the F(1) domain. Subunit alpha does not bear the catalytic high-affinity ATP-binding sites. The chain is ATP synthase F(1) complex subunit alpha, mitochondrial from Rattus norvegicus (Rat).